A 380-amino-acid chain; its full sequence is Cytochrome b (380 aa).

Helical transmembrane passes span 34-54, 78-99, 114-134, and 179-199; these read FGSL…LLAM, WLIR…FLHI, WNTG…GYVL, and FFAL…IHLT. Residues histidine 84 and histidine 98 each coordinate heme b. Positions 183 and 197 each coordinate heme b. Histidine 202 provides a ligand contact to a ubiquinone. The next 4 helical transmembrane spans lie at 227-247, 289-309, 321-341, and 348-368; these read IKDI…TLFS, LGGV…PFLH, LSQT…WIGS, and FIII…ILFP.

Belongs to the cytochrome b family. The cytochrome bc1 complex contains 11 subunits: 3 respiratory subunits (MT-CYB, CYC1 and UQCRFS1), 2 core proteins (UQCRC1 and UQCRC2) and 6 low-molecular weight proteins (UQCRH/QCR6, UQCRB/QCR7, UQCRQ/QCR8, UQCR10/QCR9, UQCR11/QCR10 and a cleavage product of UQCRFS1). This cytochrome bc1 complex then forms a dimer. It depends on heme b as a cofactor.

The protein localises to the mitochondrion inner membrane. Functionally, component of the ubiquinol-cytochrome c reductase complex (complex III or cytochrome b-c1 complex) that is part of the mitochondrial respiratory chain. The b-c1 complex mediates electron transfer from ubiquinol to cytochrome c. Contributes to the generation of a proton gradient across the mitochondrial membrane that is then used for ATP synthesis. In Alectoris graeca (Rock partridge), this protein is Cytochrome b (MT-CYB).